The primary structure comprises 235 residues: Phosphatidylserine decarboxylase proenzyme (235 aa).

S204 acts as the Schiff-base intermediate with substrate; via pyruvic acid in catalysis. At S204 the chain carries Pyruvic acid (Ser); by autocatalysis.

It belongs to the phosphatidylserine decarboxylase family. PSD-A subfamily. Heterodimer of a large membrane-associated beta subunit and a small pyruvoyl-containing alpha subunit. Pyruvate is required as a cofactor. Post-translationally, is synthesized initially as an inactive proenzyme. Formation of the active enzyme involves a self-maturation process in which the active site pyruvoyl group is generated from an internal serine residue via an autocatalytic post-translational modification. Two non-identical subunits are generated from the proenzyme in this reaction, and the pyruvate is formed at the N-terminus of the alpha chain, which is derived from the carboxyl end of the proenzyme. The post-translation cleavage follows an unusual pathway, termed non-hydrolytic serinolysis, in which the side chain hydroxyl group of the serine supplies its oxygen atom to form the C-terminus of the beta chain, while the remainder of the serine residue undergoes an oxidative deamination to produce ammonia and the pyruvoyl prosthetic group on the alpha chain.

Its subcellular location is the cell membrane. It catalyses the reaction a 1,2-diacyl-sn-glycero-3-phospho-L-serine + H(+) = a 1,2-diacyl-sn-glycero-3-phosphoethanolamine + CO2. The protein operates within phospholipid metabolism; phosphatidylethanolamine biosynthesis; phosphatidylethanolamine from CDP-diacylglycerol: step 2/2. Catalyzes the formation of phosphatidylethanolamine (PtdEtn) from phosphatidylserine (PtdSer). The chain is Phosphatidylserine decarboxylase proenzyme from Mycobacterium sp. (strain JLS).